We begin with the raw amino-acid sequence, 347 residues long: Quinolinate synthase (347 aa).

Iminosuccinate contacts are provided by H47 and S68. C113 contacts [4Fe-4S] cluster. Iminosuccinate contacts are provided by residues 139–141 (YAN) and S156. C200 lines the [4Fe-4S] cluster pocket. Iminosuccinate-binding positions include 226–228 (HPE) and T243. C297 serves as a coordination point for [4Fe-4S] cluster.

It belongs to the quinolinate synthase family. Type 1 subfamily. [4Fe-4S] cluster serves as cofactor.

It localises to the cytoplasm. The enzyme catalyses iminosuccinate + dihydroxyacetone phosphate = quinolinate + phosphate + 2 H2O + H(+). Its pathway is cofactor biosynthesis; NAD(+) biosynthesis; quinolinate from iminoaspartate: step 1/1. Its function is as follows. Catalyzes the condensation of iminoaspartate with dihydroxyacetone phosphate to form quinolinate. The protein is Quinolinate synthase of Salmonella agona (strain SL483).